We begin with the raw amino-acid sequence, 100 residues long: Gas vesicle protein J (100 aa).

This sequence belongs to the gas vesicle GvpA family. As to quaternary structure, interacts with GvpA.

The protein localises to the gas vesicle. Its function is as follows. A minor component of the gas vesicle, might be involved in nucleating gas vesicle formation. This protein could be important for the shape determination of the gas vesicle. Gas vesicles (GV) are hollow, gas filled proteinaceous nanostructures. During planktonic growth they allow positioning of the organism at a favorable depth for light or nutrient acquisition. In terms of biological role, when a minimal gvp locus (gvpA2-gvpR-gvpN-gvpF-gvpG-gvpL-gvpS-gvpK-gvpJ-gvpT-gvpU, called pNL29) is expressed in E.coli gas vesicles are made. The chain is Gas vesicle protein J from Priestia megaterium (Bacillus megaterium).